The primary structure comprises 219 residues: 7-carboxy-7-deazaguanine synthase (219 aa).

Residues 12 to 14 (IQG) and R27 each bind substrate. In terms of domain architecture, Radical SAM core spans 18–219 (YTGTPSIFIR…VQIHKYLKIR (202 aa)). Positions 31, 35, and 38 each coordinate [4Fe-4S] cluster. Position 40 (T40) interacts with Mg(2+). Residue T92 participates in substrate binding. S-adenosyl-L-methionine is bound by residues G94 and 136-138 (SPK).

Belongs to the radical SAM superfamily. 7-carboxy-7-deazaguanine synthase family. In terms of assembly, homodimer. The cofactor is [4Fe-4S] cluster. Requires S-adenosyl-L-methionine as cofactor. It depends on Mg(2+) as a cofactor.

It carries out the reaction 6-carboxy-5,6,7,8-tetrahydropterin + H(+) = 7-carboxy-7-deazaguanine + NH4(+). It functions in the pathway purine metabolism; 7-cyano-7-deazaguanine biosynthesis. Functionally, catalyzes the complex heterocyclic radical-mediated conversion of 6-carboxy-5,6,7,8-tetrahydropterin (CPH4) to 7-carboxy-7-deazaguanine (CDG), a step common to the biosynthetic pathways of all 7-deazapurine-containing compounds. This Buchnera aphidicola subsp. Schizaphis graminum (strain Sg) protein is 7-carboxy-7-deazaguanine synthase.